The chain runs to 63 residues: MKAQDLRTKSVEELNAELVNLLGEQFKLRMQTATGQLQQTHQAKQVRRDIARVKTVLTEKAGE.

The protein belongs to the universal ribosomal protein uL29 family.

The polypeptide is Large ribosomal subunit protein uL29 (Haemophilus influenzae (strain 86-028NP)).